Here is an 87-residue protein sequence, read N- to C-terminus: Small ribosomal subunit protein uS17 (87 aa).

This sequence belongs to the universal ribosomal protein uS17 family. As to quaternary structure, part of the 30S ribosomal subunit.

One of the primary rRNA binding proteins, it binds specifically to the 5'-end of 16S ribosomal RNA. The protein is Small ribosomal subunit protein uS17 of Staphylococcus aureus (strain Mu3 / ATCC 700698).